Here is a 346-residue protein sequence, read N- to C-terminus: Very-long-chain 3-oxoacyl-CoA reductase (346 aa).

Residues 19-39 form a helical membrane-spanning segment; that stretch reads LIYGVLFVGVYKITTFTLSVG. NADP(+)-binding residues include V65, D119, N146, Y220, K224, V253, and S255. Y220 functions as the Proton donor in the catalytic mechanism. K224 acts as the Lowers pKa of active site Tyr in catalysis.

This sequence belongs to the short-chain dehydrogenases/reductases (SDR) family.

The protein resides in the endoplasmic reticulum membrane. The enzyme catalyses a very-long-chain (3R)-3-hydroxyacyl-CoA + NADP(+) = a very-long-chain 3-oxoacyl-CoA + NADPH + H(+). The protein operates within lipid metabolism; fatty acid biosynthesis. Component of the microsomal membrane bound fatty acid elongation system, which produces the 26-carbon very long-chain fatty acids (VLCFA) from palmitate. Catalyzes the reduction of the 3-ketoacyl-CoA intermediate that is formed in each cycle of fatty acid elongation. VLCFAs serve as precursors for ceramide and sphingolipids. The polypeptide is Very-long-chain 3-oxoacyl-CoA reductase (Debaryomyces hansenii (strain ATCC 36239 / CBS 767 / BCRC 21394 / JCM 1990 / NBRC 0083 / IGC 2968) (Yeast)).